We begin with the raw amino-acid sequence, 579 residues long: Lens epithelium-derived growth factor (579 aa).

The region spanning 1–64 (MSRDFKPGDL…PKDIFPYSEN (64 aa)) is the PWWP domain. Disordered regions lie at residues 62-81 (SENKDKYGKPNKRKGFNEGL), 88-203 (PKVK…EEAA), 215-397 (AAPV…SMDS), and 492-579 (AEQK…FENK). The segment covering 94-107 (HQPSHPAVNTSIKE) has biased composition (polar residues). Residues 153–173 (KEMHSTKEDEEPSEKNSKEGV) show a composition bias toward basic and acidic residues. The segment covering 184-193 (VARRGRKRKA) has biased composition (basic residues). The short motif at 186-196 (RRGRKRKAEKQ) is the Nuclear localization signal element. Low complexity predominate over residues 215–224 (AAPVTVSPKV). Basic and acidic residues predominate over residues 261-308 (EEEKAKKKGPDEKPKKQGKKDEEGQKEEEKPKKEYDKKDGKKEAEPKR). Residues 321-330 (DSEDEGGEEE) are compositionally biased toward acidic residues. Residues 334 to 349 (KKKGGRSFQSTHRRNI) are compositionally biased toward basic residues. A coiled-coil region spans residues 347 to 442 (RNIMRGQHEK…SMQQAQKHTE (96 aa)). 2 stretches are compositionally biased toward basic and acidic residues: residues 352–397 (GQHE…SMDS) and 492–522 (AEQKQHEEANKTKEQWKKGTNKKNEKEKDQT). The integrase-binding domain (IBD) stretch occupies residues 387–464 (MEKKRETSMD…VSQVIMEKST (78 aa)). Residues 530-543 (GSETQDTNQSQHNG) show a composition bias toward polar residues. Residues 544–579 (ENAEEKDKLEVASKKKTCGEESELEKPAKESAFENK) are compositionally biased toward basic and acidic residues.

The protein belongs to the HDGF family.

The protein resides in the nucleus. In terms of biological role, transcriptional coactivator involved in neuroepithelial stem cell differentiation and neurogenesis. Involved in particular in lens epithelial cell gene regulation and stress responses. May play an important role in lens epithelial to fiber cell terminal differentiation. May play a protective role during stress-induced apoptosis. The protein is Lens epithelium-derived growth factor (PSIP1) of Gallus gallus (Chicken).